Consider the following 200-residue polypeptide: Holliday junction branch migration complex subunit RuvA (200 aa).

The tract at residues 1 to 63 (MYAYVKGKLT…EDAQLLYGFS (63 aa)) is domain I. Residues 64 to 142 (SEEEKDMFLS…ITEEDSDSLL (79 aa)) are domain II. The segment at 143–149 (QVDATST) is flexible linker. The tract at residues 150–200 (VQDQFVQEAMLALEALGYSKRELAKVEKTLNKNKYDSVDEAVKAGLQLVVS) is domain III.

It belongs to the RuvA family. Homotetramer. Forms an RuvA(8)-RuvB(12)-Holliday junction (HJ) complex. HJ DNA is sandwiched between 2 RuvA tetramers; dsDNA enters through RuvA and exits via RuvB. An RuvB hexamer assembles on each DNA strand where it exits the tetramer. Each RuvB hexamer is contacted by two RuvA subunits (via domain III) on 2 adjacent RuvB subunits; this complex drives branch migration. In the full resolvosome a probable DNA-RuvA(4)-RuvB(12)-RuvC(2) complex forms which resolves the HJ.

It is found in the cytoplasm. The RuvA-RuvB-RuvC complex processes Holliday junction (HJ) DNA during genetic recombination and DNA repair, while the RuvA-RuvB complex plays an important role in the rescue of blocked DNA replication forks via replication fork reversal (RFR). RuvA specifically binds to HJ cruciform DNA, conferring on it an open structure. The RuvB hexamer acts as an ATP-dependent pump, pulling dsDNA into and through the RuvAB complex. HJ branch migration allows RuvC to scan DNA until it finds its consensus sequence, where it cleaves and resolves the cruciform DNA. The protein is Holliday junction branch migration complex subunit RuvA of Staphylococcus aureus (strain USA300).